We begin with the raw amino-acid sequence, 220 residues long: MRTELTPIEARVIGCLIEKEVTTPDQYPLSLNALTNACNQKSNREPVMSLSESEVLDAVDQLISRRLVSDESGFNSRVSKYQHRFCNTEFGDLKLSAQEKGIVCCMLLRGPQTPGELRTRTNRLATFADVKEVETVLDKLASEERGQLVVKLPIEPGKRESRYMHQFCGEVDLDAFQGSALMTASSTAQFDDERVAHLEAEVEALKQELAELKSLVNSLL.

It belongs to the UPF0502 family.

The protein is UPF0502 protein VVA1225 of Vibrio vulnificus (strain YJ016).